The chain runs to 192 residues: Large ribosomal subunit protein uL5 (192 aa).

Belongs to the universal ribosomal protein uL5 family. In terms of assembly, part of the 50S ribosomal subunit; part of the 5S rRNA/L5/L18/L25 subcomplex. Contacts the 5S rRNA and the P site tRNA. Forms a bridge to the 30S subunit in the 70S ribosome.

In terms of biological role, this is one of the proteins that bind and probably mediate the attachment of the 5S RNA into the large ribosomal subunit, where it forms part of the central protuberance. In the 70S ribosome it contacts protein S13 of the 30S subunit (bridge B1b), connecting the 2 subunits; this bridge is implicated in subunit movement. Contacts the P site tRNA; the 5S rRNA and some of its associated proteins might help stabilize positioning of ribosome-bound tRNAs. The protein is Large ribosomal subunit protein uL5 of Zymomonas mobilis subsp. mobilis (strain ATCC 31821 / ZM4 / CP4).